A 345-amino-acid chain; its full sequence is Ferrochelatase (345 aa).

Histidine 215 and glutamate 296 together coordinate Fe cation.

Belongs to the ferrochelatase family.

It is found in the cytoplasm. It carries out the reaction heme b + 2 H(+) = protoporphyrin IX + Fe(2+). It functions in the pathway porphyrin-containing compound metabolism; protoheme biosynthesis; protoheme from protoporphyrin-IX: step 1/1. In terms of biological role, catalyzes the ferrous insertion into protoporphyrin IX. The chain is Ferrochelatase from Rhodopseudomonas palustris (strain HaA2).